The sequence spans 140 residues: Nucleoside diphosphate kinase (140 aa).

Residues K11, F59, R87, T93, R104, and N114 each contribute to the ATP site. The Pros-phosphohistidine intermediate role is filled by H117.

Belongs to the NDK family. In terms of assembly, homotetramer. Mg(2+) serves as cofactor.

Its subcellular location is the cytoplasm. The enzyme catalyses a 2'-deoxyribonucleoside 5'-diphosphate + ATP = a 2'-deoxyribonucleoside 5'-triphosphate + ADP. It carries out the reaction a ribonucleoside 5'-diphosphate + ATP = a ribonucleoside 5'-triphosphate + ADP. Its function is as follows. Major role in the synthesis of nucleoside triphosphates other than ATP. The ATP gamma phosphate is transferred to the NDP beta phosphate via a ping-pong mechanism, using a phosphorylated active-site intermediate. The chain is Nucleoside diphosphate kinase from Agrobacterium fabrum (strain C58 / ATCC 33970) (Agrobacterium tumefaciens (strain C58)).